The sequence spans 287 residues: NAD kinase (287 aa).

Asp-56 (proton acceptor) is an active-site residue. NAD(+) is bound by residues 56 to 57 (DG), Arg-61, 128 to 129 (ND), and Asp-156.

The protein belongs to the NAD kinase family. It depends on a divalent metal cation as a cofactor.

The protein localises to the cytoplasm. It catalyses the reaction NAD(+) + ATP = ADP + NADP(+) + H(+). In terms of biological role, involved in the regulation of the intracellular balance of NAD and NADP, and is a key enzyme in the biosynthesis of NADP. Catalyzes specifically the phosphorylation on 2'-hydroxyl of the adenosine moiety of NAD to yield NADP. This is NAD kinase from Thermomicrobium roseum (strain ATCC 27502 / DSM 5159 / P-2).